A 678-amino-acid polypeptide reads, in one-letter code: UvrABC system protein B (678 aa).

The region spanning 31–417 (EGLENGLAHQ…KSGGEIIDQV (387 aa)) is the Helicase ATP-binding domain. Residue 44 to 51 (GVTGSGKT) participates in ATP binding. Residues 97–120 (YYDYYQPEAYVPSSDTFIEKDASI) carry the Beta-hairpin motif. In terms of domain architecture, Helicase C-terminal spans 436-589 (QVDDLLSEAR…QMKYNEARGI (154 aa)). In terms of domain architecture, UVR spans 638–673 (QQQIKKLEQQMYKYAQDLEFEKAAAVRDQLQQLREH).

Belongs to the UvrB family. Forms a heterotetramer with UvrA during the search for lesions. Interacts with UvrC in an incision complex.

Its subcellular location is the cytoplasm. Functionally, the UvrABC repair system catalyzes the recognition and processing of DNA lesions. A damage recognition complex composed of 2 UvrA and 2 UvrB subunits scans DNA for abnormalities. Upon binding of the UvrA(2)B(2) complex to a putative damaged site, the DNA wraps around one UvrB monomer. DNA wrap is dependent on ATP binding by UvrB and probably causes local melting of the DNA helix, facilitating insertion of UvrB beta-hairpin between the DNA strands. Then UvrB probes one DNA strand for the presence of a lesion. If a lesion is found the UvrA subunits dissociate and the UvrB-DNA preincision complex is formed. This complex is subsequently bound by UvrC and the second UvrB is released. If no lesion is found, the DNA wraps around the other UvrB subunit that will check the other stand for damage. The protein is UvrABC system protein B of Pasteurella multocida (strain Pm70).